Reading from the N-terminus, the 275-residue chain is Exosome complex component RRP40 (275 aa).

Alanine 2 carries the N-acetylalanine modification. Lysine 151 is covalently cross-linked (Glycyl lysine isopeptide (Lys-Gly) (interchain with G-Cter in SUMO2)).

The protein belongs to the RRP40 family. As to quaternary structure, component of the RNA exosome core complex (Exo-9), composed of EXOSC1, EXOSC2, EXOSC3, EXOSC4, EXOSC5, EXOSC6, EXOSC7, EXOSC8 and EXOSC9; within the complex interacts with EXOSC5 and EXOSC9. The catalytically inactive RNA exosome core complex (Exo-9) associates with the catalytic subunit EXOSC10/RRP6. Exo-9 may associate with DIS3 to form the nucleolar exosome complex, or DIS3L to form the cytoplasmic exosome complex. Exo-9 is formed by a hexameric base ring consisting of the heterodimers EXOSC4-EXOSC9, EXOSC5-EXOSC8 and EXOSC6-EXOSC7, and a cap ring consisting of EXOSC1, EXOSC2 and EXOSC3. The RNA exosome complex associates with cofactors C1D/RRP47, MPHOSPH6/MPP6 and MTREX/MTR4. Interacts with MPHOSPH6/MPP6; the interaction is direct. Interacts with GTPBP1. Interacts with ZC3HAV1. Interacts with DDX17 only in the presence of ZC3HAV1 in an RNA-independent manner. Interacts with DHX36; this interaction occurs in a RNase-insensitive manner. Interacts with HBS1L isoform 2.

The protein resides in the cytoplasm. It localises to the nucleus. It is found in the nucleolus. Its function is as follows. Non-catalytic component of the RNA exosome complex which has 3'-&gt;5' exoribonuclease activity and participates in a multitude of cellular RNA processing and degradation events. In the nucleus, the RNA exosome complex is involved in proper maturation of stable RNA species such as rRNA, snRNA and snoRNA, in the elimination of RNA processing by-products and non-coding 'pervasive' transcripts, such as antisense RNA species and promoter-upstream transcripts (PROMPTs), and of mRNAs with processing defects, thereby limiting or excluding their export to the cytoplasm. The RNA exosome may be involved in Ig class switch recombination (CSR) and/or Ig variable region somatic hypermutation (SHM) by targeting AICDA deamination activity to transcribed dsDNA substrates. In the cytoplasm, the RNA exosome complex is involved in general mRNA turnover and specifically degrades inherently unstable mRNAs containing AU-rich elements (AREs) within their 3' untranslated regions, and in RNA surveillance pathways, preventing translation of aberrant mRNAs. It seems to be involved in degradation of histone mRNA. The catalytic inactive RNA exosome core complex of 9 subunits (Exo-9) is proposed to play a pivotal role in the binding and presentation of RNA for ribonucleolysis, and to serve as a scaffold for the association with catalytic subunits and accessory proteins or complexes. EXOSC3 as peripheral part of the Exo-9 complex stabilizes the hexameric ring of RNase PH-domain subunits through contacts with EXOSC9 and EXOSC5. This chain is Exosome complex component RRP40 (EXOSC3), found in Homo sapiens (Human).